The following is a 111-amino-acid chain: MGSSSFLVLMVSLVLVTLVAVEGVKEGIEKAGVCPADNVRCFKSDPPQCHTDQDCLGERKCCYLHCGFKCVIPVKELEEGGNKDEDVSRPYPEPGWEAKCPGSSSTRCPQK.

An N-terminal signal peptide occupies residues 1 to 23 (MGSSSFLVLMVSLVLVTLVAVEG). The region spanning 27–74 (GIEKAGVCPADNVRCFKSDPPQCHTDQDCLGERKCCYLHCGFKCVIPV) is the WAP domain. Cystine bridges form between Cys-34-Cys-62, Cys-41-Cys-66, Cys-49-Cys-61, and Cys-55-Cys-70. Residues 80 to 111 (GGNKDEDVSRPYPEPGWEAKCPGSSSTRCPQK) form a disordered region. Over residues 102–111 (GSSSTRCPQK) the composition is skewed to polar residues.

Highly expressed in prostate, skin, lung and esophagus. Weakly expressed in skeletal muscle, epididymis, kidney, trachea, salivary gland, testis and seminal vesicle.

It localises to the secreted. Functionally, antibacterial protein. Putative acid-stable proteinase inhibitor. The chain is WAP four-disulfide core domain protein 12 (WFDC12) from Homo sapiens (Human).